The sequence spans 417 residues: Phosphoglycerate kinase, cytosolic (417 aa).

(2R)-3-phosphoglycerate is bound by residues valine 23, aspartate 24, phenylalanine 25, asparagine 26, arginine 39, serine 61, histidine 62, glycine 64, arginine 65, arginine 132, histidine 168, and arginine 169. Positions 214 and 215 each coordinate ADP. Glycine 214 contributes to the CDP binding site. 2 residues coordinate AMP: alanine 215 and lysine 216. Residue alanine 215 coordinates ATP. Alanine 215 lines the Mg(2+) pocket. Lysine 216 serves as a coordination point for (2R)-3-phosphoglycerate. Aspartate 219 lines the CDP pocket. Aspartate 219 lines the Mg(2+) pocket. ADP is bound by residues lysine 220 and glycine 238. Position 220 (lysine 220) interacts with AMP. An ATP-binding site is contributed by lysine 220. Glycine 238 is a CDP binding site. AMP-binding residues include alanine 239 and alanine 311. ATP contacts are provided by alanine 239 and alanine 311. Residues alanine 311 and asparagine 335 each coordinate ADP. The CDP site is built by glycine 336 and phenylalanine 341. ADP-binding residues include phenylalanine 341, glutamate 342, aspartate 374, and threonine 375. Glutamate 342 lines the AMP pocket. 3 residues coordinate ATP: glutamate 342, aspartate 374, and threonine 375. Aspartate 374 serves as a coordination point for Mg(2+).

This sequence belongs to the phosphoglycerate kinase family. As to quaternary structure, monomer. Mg(2+) is required as a cofactor.

Its subcellular location is the cytoplasm. The catalysed reaction is (2R)-3-phosphoglycerate + ATP = (2R)-3-phospho-glyceroyl phosphate + ADP. The protein operates within carbohydrate degradation; glycolysis; pyruvate from D-glyceraldehyde 3-phosphate: step 2/5. The protein is Phosphoglycerate kinase, cytosolic (PGKB) of Leishmania mexicana.